A 60-amino-acid polypeptide reads, in one-letter code: Large ribosomal subunit protein bL32 (60 aa).

Positions 1 to 21 are disordered; it reads MAVPARHTSKAKKNKRRTHYK. Residues 7–20 show a composition bias toward basic residues; sequence HTSKAKKNKRRTHY.

This sequence belongs to the bacterial ribosomal protein bL32 family.

This is Large ribosomal subunit protein bL32 from Streptococcus thermophilus (strain ATCC BAA-250 / LMG 18311).